The sequence spans 380 residues: Chaperone protein DnaJ (380 aa).

The J domain occupies 5 to 70; sequence DFYEVLGVSK…NLRARYDQYG (66 aa). A CR-type zinc finger spans residues 135–213; it reads GVSKEIKVPS…CHGEGRYQKT (79 aa). Residues cysteine 148, cysteine 151, cysteine 165, cysteine 168, cysteine 187, cysteine 190, cysteine 201, and cysteine 204 each coordinate Zn(2+). 4 CXXCXGXG motif repeats span residues 148–155, 165–172, 187–194, and 201–208; these read CEVCNGSG, CPTCHGAG, CPHCHGRG, and CRKCHGEG.

Belongs to the DnaJ family. In terms of assembly, homodimer. It depends on Zn(2+) as a cofactor.

It is found in the cytoplasm. Functionally, participates actively in the response to hyperosmotic and heat shock by preventing the aggregation of stress-denatured proteins and by disaggregating proteins, also in an autonomous, DnaK-independent fashion. Unfolded proteins bind initially to DnaJ; upon interaction with the DnaJ-bound protein, DnaK hydrolyzes its bound ATP, resulting in the formation of a stable complex. GrpE releases ADP from DnaK; ATP binding to DnaK triggers the release of the substrate protein, thus completing the reaction cycle. Several rounds of ATP-dependent interactions between DnaJ, DnaK and GrpE are required for fully efficient folding. Also involved, together with DnaK and GrpE, in the DNA replication of plasmids through activation of initiation proteins. The polypeptide is Chaperone protein DnaJ (Aeromonas salmonicida (strain A449)).